Consider the following 131-residue polypeptide: Small ribosomal subunit protein bS6 (131 aa).

A disordered region spans residues 98–131; the sequence is EASPMVKAKDERRERRDDFANETADDSDAGDSEE. Residues 104 to 116 are compositionally biased toward basic and acidic residues; the sequence is KAKDERRERRDDF. A compositionally biased stretch (acidic residues) spans 120-131; sequence TADDSDAGDSEE.

The protein belongs to the bacterial ribosomal protein bS6 family.

Binds together with bS18 to 16S ribosomal RNA. In Enterobacter sp. (strain 638), this protein is Small ribosomal subunit protein bS6.